The sequence spans 98 residues: DNA-binding protein Fis (98 aa).

The H-T-H motif DNA-binding region spans 74-93 (QTKAANMMGINRGTLRKKLK).

Belongs to the transcriptional regulatory Fis family. Homodimer.

In terms of biological role, activates ribosomal RNA transcription. Plays a direct role in upstream activation of rRNA promoters. The chain is DNA-binding protein Fis from Aliivibrio fischeri (strain ATCC 700601 / ES114) (Vibrio fischeri).